Reading from the N-terminus, the 601-residue chain is NADH-ubiquinone oxidoreductase chain 5 (601 aa).

The next 17 helical transmembrane spans lie at 5–25, 37–54, 83–105, 112–129, 134–156, 169–189, 209–231, 240–260, 271–291, 300–320, 323–343, 363–383, 400–420, 451–471, 478–498, 508–528, and 581–601; these read ITSLMTNFCLITTILSLTLSF, YMRNAFIISLLPLIIYID, YCLTFFSIALYITWSIMQFSLWY, TLFFKYLTMFLISMLFFL, LLQLILGWEGMGIMSFLLINWWH, IIYNRIGDTGLIIFMIWSALF, WLPLLGIVLAATGKSAQFMLHPW, TPVSALLHSSTMVVSGVFLLI, MIISIILCLGAMTTLFAALCA, IIAFSTTSQLGLMTVTIGINQ, LAFLHMSTHAFFKALLFLCSA, LILPFTSSCTLISSLALMGMP, MSYVNAWALLSTMLATALTSI, PLIRLTLGSIIFGFIISTFFL, FSIPFNSKILPTIMLILVSSL, FSHMPPLFFPSMSGYFPAIFH, and NYITIFVITILSSLLTSALYF.

The protein belongs to the complex I subunit 5 family.

The protein resides in the mitochondrion inner membrane. The enzyme catalyses a ubiquinone + NADH + 5 H(+)(in) = a ubiquinol + NAD(+) + 4 H(+)(out). Functionally, core subunit of the mitochondrial membrane respiratory chain NADH dehydrogenase (Complex I) that is believed to belong to the minimal assembly required for catalysis. Complex I functions in the transfer of electrons from NADH to the respiratory chain. The immediate electron acceptor for the enzyme is believed to be ubiquinone. The chain is NADH-ubiquinone oxidoreductase chain 5 (MT-ND5) from Myxine glutinosa (Atlantic hagfish).